Here is a 428-residue protein sequence, read N- to C-terminus: Histidine--tRNA ligase (428 aa).

It belongs to the class-II aminoacyl-tRNA synthetase family. In terms of assembly, homodimer.

The protein localises to the cytoplasm. It catalyses the reaction tRNA(His) + L-histidine + ATP = L-histidyl-tRNA(His) + AMP + diphosphate + H(+). This Ectopseudomonas mendocina (strain ymp) (Pseudomonas mendocina) protein is Histidine--tRNA ligase.